The chain runs to 346 residues: tRNA N6-adenosine threonylcarbamoyltransferase (346 aa).

2 residues coordinate Fe cation: His111 and His115. Residues 134-138, Asp167, Gly180, Asp184, and Asn279 contribute to the substrate site; that span reads LVSGG. Asp307 contacts Fe cation.

Belongs to the KAE1 / TsaD family. The cofactor is Fe(2+).

It localises to the cytoplasm. It catalyses the reaction L-threonylcarbamoyladenylate + adenosine(37) in tRNA = N(6)-L-threonylcarbamoyladenosine(37) in tRNA + AMP + H(+). Required for the formation of a threonylcarbamoyl group on adenosine at position 37 (t(6)A37) in tRNAs that read codons beginning with adenine. Is involved in the transfer of the threonylcarbamoyl moiety of threonylcarbamoyl-AMP (TC-AMP) to the N6 group of A37, together with TsaE and TsaB. TsaD likely plays a direct catalytic role in this reaction. This Trichormus variabilis (strain ATCC 29413 / PCC 7937) (Anabaena variabilis) protein is tRNA N6-adenosine threonylcarbamoyltransferase.